The sequence spans 163 residues: Putative protein CASTOR3P (163 aa).

Belongs to the GATS family.

This is Putative protein CASTOR3P from Homo sapiens (Human).